The following is an 843-amino-acid chain: MRSVPNYHHSFFIFLILILFLAFSVSPNTLSATESLTISSNKTIISPSQIFELGFFNPASSSRWYLGIWYKIIPIRTYVWVANRDNPLSSSNGTLKISGNNLVIFDQSDRPVWSTNITGGDVRSPVAAELLDNGNFLLRDSNNRLLWQSFDFPTDTLLAEMKLGWDQKTGFNRILRSWKTTDDPSSGEFSTKLETSEFPEFYICSKESILYRSGPWNGMRFSSVPGTIQVDYMVYNFTASKEEVTYSYRINKTNLYSRLYLNSAGLLQRLTWFETTQSWKQLWYSPKDLCDNYKVCGNFGYCDSNSLPNCYCIKGFKPVNEQAWDLRDGSAGCMRKTRLSCDGRDGFTRLKRMKLPDTTATIVDREIGLKVCKERCLEDCNCTAFANADIRNGGSGCVIWTREILDMRNYAKGGQDLYVRLAAAELEDKRIKNEKIIGSSIGVSILLLLSFVIFHFWKRKQKRSITIQTPNVDQVRSQDSLINDVVVSRRGYTSKEKKSEYLELPLLELEALATATNNFSNDNKLGQGGFGIVYKGRLLDGKEIAVKRLSKMSSQGTDEFMNEVRLIAKLQHINLVRLLGCCVDKGEKMLIYEYLENLSLDSHLFDQTRSSNLNWQKRFDIINGIARGLLYLHQDSRCRIIHRDLKASNVLLDKNMTPKISDFGMARIFGREETEANTRRVVGTYGYMSPEYAMDGIFSMKSDVFSFGVLLLEIISGKRNKGFYNSNRDLNLLGFVWRHWKEGNELEIVDPINIDSLSSKFPTHEILRCIQIGLLCVQERAEDRPVMSSVMVMLGSETTAIPQPKRPGFCIGRSPLEADSSSSTQRDDECTVNQITLSVIDAR.

The signal sequence occupies residues 1-31 (MRSVPNYHHSFFIFLILILFLAFSVSPNTLS). In terms of domain architecture, Bulb-type lectin spans 32 to 151 (ATESLTISSN…NNRLLWQSFD (120 aa)). Over 32 to 435 (ATESLTISSN…LEDKRIKNEK (404 aa)) the chain is Extracellular. 5 N-linked (GlcNAc...) asparagine glycosylation sites follow: asparagine 41, asparagine 92, asparagine 116, asparagine 236, and asparagine 251. The EGF-like; atypical domain occupies 286 to 322 (PKDLCDNYKVCGNFGYCDSNSLPNCYCIKGFKPVNEQ). 4 cysteine pairs are disulfide-bonded: cysteine 290-cysteine 302, cysteine 296-cysteine 310, cysteine 372-cysteine 397, and cysteine 376-cysteine 382. Positions 341-422 (CDGRDGFTRL…GGQDLYVRLA (82 aa)) constitute a PAN domain. Residue asparagine 381 is glycosylated (N-linked (GlcNAc...) asparagine). A helical membrane pass occupies residues 436–456 (IIGSSIGVSILLLLSFVIFHF). The Cytoplasmic segment spans residues 457 to 843 (WKRKQKRSIT…QITLSVIDAR (387 aa)). The Protein kinase domain occupies 519–809 (FSNDNKLGQG…AIPQPKRPGF (291 aa)). ATP-binding positions include 525–533 (LGQGGFGIV) and lysine 547. Serine 553 carries the post-translational modification Phosphoserine. The interval 608–625 (TRSSNLNWQKRFDIINGI) is caM-binding. Residue aspartate 644 is the Proton acceptor of the active site. Residues serine 648 and serine 661 each carry the phosphoserine modification. A Phosphothreonine modification is found at threonine 678. Position 820 is a phosphoserine (serine 820).

The protein belongs to the protein kinase superfamily. Ser/Thr protein kinase family. In terms of assembly, interacts with PUB9, PUB13, PUB14 and PUB38. In terms of processing, autophosphorylated on serine and threonine residues. As to expression, mostly expressed in leaves, and, to a lower extent, in stems and flower buds.

It is found in the cell membrane. The enzyme catalyses L-seryl-[protein] + ATP = O-phospho-L-seryl-[protein] + ADP + H(+). It catalyses the reaction L-threonyl-[protein] + ATP = O-phospho-L-threonyl-[protein] + ADP + H(+). Its function is as follows. Involved in the regulation of cellular expansion and differentiation. Mediates subcellular relocalization of PUB9 from nucleus to plasma membrane in a protein-phosphorylation-dependent manner. May be involved in the abscisic acid-mediated signaling pathway, at least during germination. The polypeptide is Receptor-like serine/threonine-protein kinase SD1-7 (SD17) (Arabidopsis thaliana (Mouse-ear cress)).